The following is a 984-amino-acid chain: Probable beta-galactosidase C (984 aa).

An N-terminal signal peptide occupies residues 1 to 23 (MRLLSFIYLVWLALLTGTPQVSA). Positions 82, 127, 128, 129, and 187 each coordinate substrate. The Proton donor role is filled by glutamate 188. The N-linked (GlcNAc...) asparagine glycan is linked to asparagine 197. Tyrosine 251 serves as a coordination point for substrate. Cysteine 257 and cysteine 304 form a disulfide bridge. N-linked (GlcNAc...) asparagine glycosylation is present at asparagine 276. Glutamate 287 functions as the Nucleophile in the catalytic mechanism. Substrate is bound at residue tyrosine 353. N-linked (GlcNAc...) asparagine glycans are attached at residues asparagine 391, asparagine 421, asparagine 434, asparagine 517, asparagine 602, asparagine 677, asparagine 715, asparagine 720, asparagine 759, and asparagine 805.

This sequence belongs to the glycosyl hydrolase 35 family.

The protein localises to the secreted. It carries out the reaction Hydrolysis of terminal non-reducing beta-D-galactose residues in beta-D-galactosides.. Functionally, cleaves beta-linked terminal galactosyl residues from gangliosides, glycoproteins, and glycosaminoglycans. This Aspergillus flavus (strain ATCC 200026 / FGSC A1120 / IAM 13836 / NRRL 3357 / JCM 12722 / SRRC 167) protein is Probable beta-galactosidase C (lacC).